Reading from the N-terminus, the 1400-residue chain is DNA-directed RNA polymerase subunit beta' (1400 aa).

Residues Cys71, Cys73, Cys86, and Cys89 each coordinate Zn(2+). Residues Asp462, Asp464, and Asp466 each contribute to the Mg(2+) site. Cys820, Cys893, Cys900, and Cys903 together coordinate Zn(2+).

Belongs to the RNA polymerase beta' chain family. In terms of assembly, the RNAP catalytic core consists of 2 alpha, 1 beta, 1 beta' and 1 omega subunit. When a sigma factor is associated with the core the holoenzyme is formed, which can initiate transcription. It depends on Mg(2+) as a cofactor. Zn(2+) is required as a cofactor.

It carries out the reaction RNA(n) + a ribonucleoside 5'-triphosphate = RNA(n+1) + diphosphate. Functionally, DNA-dependent RNA polymerase catalyzes the transcription of DNA into RNA using the four ribonucleoside triphosphates as substrates. The chain is DNA-directed RNA polymerase subunit beta' from Methylobacterium sp. (strain 4-46).